The primary structure comprises 430 residues: Cyclin-A2 (430 aa).

Met-1 carries the post-translational modification N-acetylmethionine. 2 disordered regions span residues 1–80 (MLGS…PIND) and 106–129 (EEIQKRPTESKKSESEDVLAFNSA). Ser-5 carries the phosphoserine modification. Residues 107-120 (EIQKRPTESKKSES) are compositionally biased toward basic and acidic residues.

It belongs to the cyclin family. Cyclin AB subfamily. In terms of assembly, interacts with the CDK1 and CDK2 protein kinases to form serine/threonine kinase holoenzyme complexes. Interacts with CDK1 (hyperphosphorylated form in G1 and underphosphorylated forms in S and G2). Interacts with CDK2; the interaction increases from G1 to G2. Interacts (associated with CDK2 but not with CDK1) with SCAPER; regulates the activity of CCNA2/CDK2 by transiently maintaining CCNA2 in the cytoplasm. Forms a ternary complex with CDK2 and CDKN1B; CDKN1B inhibits the kinase activity of CDK2 through conformational rearrangements. Interacts with INCA1. Post-translationally, polyubiquitinated via 'Lys-11'-linked ubiquitin by the anaphase-promoting complex (APC/C), leading to its degradation by the proteasome. Deubiquitinated and stabilized by USP37 enables entry into S phase. Ubiquitinated during the G1 phase by the SCF(FBXO31) complex, leading to its proteasomal degradation.

The protein localises to the nucleus. It localises to the cytoplasm. Functionally, cyclin which controls both the G1/S and the G2/M transition phases of the cell cycle. Functions through the formation of specific serine/threonine kinase holoenzyme complexes with the cyclin-dependent protein kinases CDK1 and CDK2. The cyclin subunit confers the substrate specificity of these complexes and differentially interacts with and activates CDK1 and CDK2 throughout the cell cycle. The polypeptide is Cyclin-A2 (Bos taurus (Bovine)).